We begin with the raw amino-acid sequence, 292 residues long: tRNA pseudouridine synthase B (292 aa).

The Nucleophile role is filled by Asp38.

Belongs to the pseudouridine synthase TruB family. Type 1 subfamily.

It carries out the reaction uridine(55) in tRNA = pseudouridine(55) in tRNA. Its function is as follows. Responsible for synthesis of pseudouridine from uracil-55 in the psi GC loop of transfer RNAs. The chain is tRNA pseudouridine synthase B from Gloeobacter violaceus (strain ATCC 29082 / PCC 7421).